We begin with the raw amino-acid sequence, 962 residues long: Replication protein 1a (962 aa).

In terms of domain architecture, Alphavirus-like MT spans 71–270; it reads LQLSKNLCPH…HSWKNIKSFL (200 aa). The tract at residues 79–356 is methyltransferase; the sequence is PHSFAGAMRQ…EEICFRCPKD (278 aa). A disordered region spans residues 536 to 561; sequence DVDERPAGTVSGPTIQAPSVTQENTV. Residues 546-561 show a composition bias toward polar residues; that stretch reads SGPTIQAPSVTQENTV. The (+)RNA virus helicase ATP-binding domain occupies 667–820; sequence NKDCVLNNNV…KLSPDSSDQQ (154 aa). Residues 693-941 form an ATP-dependent helicase region; the sequence is LMDGVAGCGK…STKCDLFTDK (249 aa). Positions 821–962 constitute a (+)RNA virus helicase C-terminal domain; it reads IRTFRCPKDV…SRKFRLLFGC (142 aa).

It belongs to the bromoviridae replication protein 1a family. As to quaternary structure, interacts with RNA-directed RNA polymerase 2a.

It localises to the host endoplasmic reticulum membrane. Involved in the virus replication. Contains a helicase domain and a methyltransferase domain. The methyltransferase domain is probably involved in viral RNA capping. Involved in the formation of ER membrane spherular invaginations in which RNA replication complexes form. The chain is Replication protein 1a from Solanum lycopersicum (Tomato).